A 525-amino-acid polypeptide reads, in one-letter code: DEAD-box ATP-dependent RNA helicase CshA (525 aa).

The Q motif motif lies at 2-30; the sequence is TTFRELGLSDSLLQSVESMGFEEATPIQA. Positions 33–203 constitute a Helicase ATP-binding domain; the sequence is IPHALQGKDI…ERFMTEPQHI (171 aa). 46-53 contributes to the ATP binding site; it reads AQTGTGKT. Residues 151-154 carry the DEAD box motif; the sequence is DEAD. The 161-residue stretch at 214–374 folds into the Helicase C-terminal domain; the sequence is NIQQFYLEVQ…RMDAPTLDEA (161 aa). The tract at residues 428–525 is disordered; sequence TTPIALTSEP…RKHHSRKPQA (98 aa). Positions 458-503 are enriched in basic and acidic residues; that stretch reads DGNRNRSRDGRGGDGRNRDRNRDGRNRDGNRDRNRDGGNRGRRGEG. The segment covering 515 to 525 has biased composition (basic residues); it reads ERKHHSRKPQA.

It belongs to the DEAD box helicase family. CshA subfamily. As to quaternary structure, oligomerizes, may be a member of the RNA degradosome.

The protein localises to the cytoplasm. It carries out the reaction ATP + H2O = ADP + phosphate + H(+). Functionally, DEAD-box RNA helicase possibly involved in RNA degradation. Unwinds dsRNA in both 5'- and 3'-directions, has RNA-dependent ATPase activity. The sequence is that of DEAD-box ATP-dependent RNA helicase CshA from Bacillus cereus (strain ATCC 10987 / NRS 248).